The sequence spans 274 residues: 3-methyl-2-oxobutanoate hydroxymethyltransferase (274 aa).

Residues aspartate 49 and aspartate 88 each contribute to the Mg(2+) site. 3-methyl-2-oxobutanoate is bound by residues 49–50 (DS), aspartate 88, and lysine 118. Glutamate 120 provides a ligand contact to Mg(2+). The active-site Proton acceptor is the glutamate 187.

Belongs to the PanB family. In terms of assembly, homodecamer; pentamer of dimers. It depends on Mg(2+) as a cofactor.

The protein resides in the cytoplasm. It carries out the reaction 3-methyl-2-oxobutanoate + (6R)-5,10-methylene-5,6,7,8-tetrahydrofolate + H2O = 2-dehydropantoate + (6S)-5,6,7,8-tetrahydrofolate. The protein operates within cofactor biosynthesis; (R)-pantothenate biosynthesis; (R)-pantoate from 3-methyl-2-oxobutanoate: step 1/2. Functionally, catalyzes the reversible reaction in which hydroxymethyl group from 5,10-methylenetetrahydrofolate is transferred onto alpha-ketoisovalerate to form ketopantoate. In Parvibaculum lavamentivorans (strain DS-1 / DSM 13023 / NCIMB 13966), this protein is 3-methyl-2-oxobutanoate hydroxymethyltransferase.